A 396-amino-acid chain; its full sequence is Argininosuccinate synthase (396 aa).

ATP is bound at residue 9 to 17 (AYSGGLDTS). Tyr85 contributes to the L-citrulline binding site. Position 115 (Gly115) interacts with ATP. L-aspartate contacts are provided by Thr117, Asn121, and Asp122. An L-citrulline-binding site is contributed by Asn121. Positions 125, 173, 258, and 270 each coordinate L-citrulline.

This sequence belongs to the argininosuccinate synthase family. Type 1 subfamily. As to quaternary structure, homotetramer.

The protein resides in the cytoplasm. The enzyme catalyses L-citrulline + L-aspartate + ATP = 2-(N(omega)-L-arginino)succinate + AMP + diphosphate + H(+). It functions in the pathway amino-acid biosynthesis; L-arginine biosynthesis; L-arginine from L-ornithine and carbamoyl phosphate: step 2/3. The sequence is that of Argininosuccinate synthase from Streptococcus agalactiae serotype Ia (strain ATCC 27591 / A909 / CDC SS700).